The primary structure comprises 397 residues: Argininosuccinate synthase (397 aa).

9–17 (AYSGGLDTS) contributes to the ATP binding site. Residue tyrosine 87 coordinates L-citrulline. Residue glycine 117 participates in ATP binding. Positions 119, 123, and 124 each coordinate L-aspartate. Asparagine 123 contributes to the L-citrulline binding site. 5 residues coordinate L-citrulline: arginine 127, serine 175, serine 184, glutamate 260, and tyrosine 272.

This sequence belongs to the argininosuccinate synthase family. Type 1 subfamily. As to quaternary structure, homotetramer.

Its subcellular location is the cytoplasm. The catalysed reaction is L-citrulline + L-aspartate + ATP = 2-(N(omega)-L-arginino)succinate + AMP + diphosphate + H(+). It participates in amino-acid biosynthesis; L-arginine biosynthesis; L-arginine from L-ornithine and carbamoyl phosphate: step 2/3. The chain is Argininosuccinate synthase from Methanococcus maripaludis (strain DSM 14266 / JCM 13030 / NBRC 101832 / S2 / LL).